Here is a 379-residue protein sequence, read N- to C-terminus: Tryptophan 2,3-dioxygenase (379 aa).

Substrate contacts are provided by residues 57 to 61 and Arg-128; that span reads FIITH. His-312 serves as a coordination point for heme. Thr-327 is a substrate binding site.

Belongs to the tryptophan 2,3-dioxygenase family. In terms of assembly, homotetramer. Dimer of dimers. The cofactor is heme.

It carries out the reaction L-tryptophan + O2 = N-formyl-L-kynurenine. Its pathway is amino-acid degradation; L-tryptophan degradation via kynurenine pathway; L-kynurenine from L-tryptophan: step 1/2. It participates in pigment biosynthesis; ommochrome biosynthesis. Heme-dependent dioxygenase that catalyzes the oxidative cleavage of the L-tryptophan (L-Trp) pyrrole ring and converts L-tryptophan to N-formyl-L-kynurenine. Catalyzes the oxidative cleavage of the indole moiety. This Drosophila erecta (Fruit fly) protein is Tryptophan 2,3-dioxygenase.